Reading from the N-terminus, the 150-residue chain is Soluble pyridine nucleotide transhydrogenase (150 aa).

The protein belongs to the class-I pyridine nucleotide-disulfide oxidoreductase family. It depends on FAD as a cofactor.

The protein resides in the cytoplasm. It carries out the reaction NAD(+) + NADPH = NADH + NADP(+). Conversion of NADPH, generated by peripheral catabolic pathways, to NADH, which can enter the respiratory chain for energy generation. The chain is Soluble pyridine nucleotide transhydrogenase (sthA) from Pectobacterium carotovorum subsp. carotovorum (Erwinia carotovora subsp. carotovora).